A 109-amino-acid polypeptide reads, in one-letter code: Oncomodulin-1 (109 aa).

Ser2 carries the post-translational modification N-acetylserine. EF-hand domains lie at Met39–Gly74 and Leu78–Ser109. Ca(2+) is bound by residues Asp52, Asp54, Ser56, Tyr58, Glu63, Asp91, Asp93, Asp95, Lys97, and Glu102.

The protein belongs to the parvalbumin family.

Has some calmodulin-like activity with respect to enzyme activation and growth regulation. Binds two calcium ions. This is Oncomodulin-1 (OCM) from Homo sapiens (Human).